Reading from the N-terminus, the 88-residue chain is Small cysteine and glycine repeat-containing protein 1 (88 aa).

The interval 4–72 (CGCGGCGGCG…TCSSCGYSCG (69 aa)) is 10 X 2 AA repeats of CG.

Belongs to the KRTAP type 28 family.

In terms of biological role, in the hair cortex, hair keratin intermediate filaments are embedded in an interfilamentous matrix, consisting of hair keratin-associated proteins (KRTAP), which are essential for the formation of a rigid and resistant hair shaft through their extensive disulfide bond cross-linking with abundant cysteine residues of hair keratins. The matrix proteins include the high-sulfur and high-glycine-tyrosine keratins. This chain is Small cysteine and glycine repeat-containing protein 1, found in Homo sapiens (Human).